The primary structure comprises 248 residues: Coproheme decarboxylase (248 aa).

Residues Arg-130, 144-148, His-171, Gln-184, and Ser-222 each bind Fe-coproporphyrin III; that span reads YPMDK. Tyr-144 is an active-site residue.

This sequence belongs to the ChdC family. Type 1 subfamily. Homopentamer. Requires Fe-coproporphyrin III as cofactor.

The enzyme catalyses Fe-coproporphyrin III + 2 H2O2 + 2 H(+) = heme b + 2 CO2 + 4 H2O. The catalysed reaction is Fe-coproporphyrin III + H2O2 + H(+) = harderoheme III + CO2 + 2 H2O. It catalyses the reaction harderoheme III + H2O2 + H(+) = heme b + CO2 + 2 H2O. The protein operates within porphyrin-containing compound metabolism; protoheme biosynthesis. Involved in coproporphyrin-dependent heme b biosynthesis. Catalyzes the decarboxylation of Fe-coproporphyrin III (coproheme) to heme b (protoheme IX), the last step of the pathway. The reaction occurs in a stepwise manner with a three-propionate intermediate. The sequence is that of Coproheme decarboxylase from Geobacillus kaustophilus (strain HTA426).